A 107-amino-acid chain; its full sequence is Phosphoribosyl-ATP pyrophosphatase 1 (107 aa).

It belongs to the PRA-PH family.

It is found in the cytoplasm. It carries out the reaction 1-(5-phospho-beta-D-ribosyl)-ATP + H2O = 1-(5-phospho-beta-D-ribosyl)-5'-AMP + diphosphate + H(+). The protein operates within amino-acid biosynthesis; L-histidine biosynthesis; L-histidine from 5-phospho-alpha-D-ribose 1-diphosphate: step 2/9. This Rhodopseudomonas palustris (strain ATCC BAA-98 / CGA009) protein is Phosphoribosyl-ATP pyrophosphatase 1 (hisE1).